We begin with the raw amino-acid sequence, 165 residues long: SsrA-binding protein (165 aa).

Residues 135 to 158 show a composition bias toward basic and acidic residues; sequence QAHDKRQDMARRDAQREVTRELGR. The segment at 135–165 is disordered; the sequence is QAHDKRQDMARRDAQREVTRELGRRVKGMTN.

Belongs to the SmpB family.

The protein localises to the cytoplasm. Functionally, required for rescue of stalled ribosomes mediated by trans-translation. Binds to transfer-messenger RNA (tmRNA), required for stable association of tmRNA with ribosomes. tmRNA and SmpB together mimic tRNA shape, replacing the anticodon stem-loop with SmpB. tmRNA is encoded by the ssrA gene; the 2 termini fold to resemble tRNA(Ala) and it encodes a 'tag peptide', a short internal open reading frame. During trans-translation Ala-aminoacylated tmRNA acts like a tRNA, entering the A-site of stalled ribosomes, displacing the stalled mRNA. The ribosome then switches to translate the ORF on the tmRNA; the nascent peptide is terminated with the 'tag peptide' encoded by the tmRNA and targeted for degradation. The ribosome is freed to recommence translation, which seems to be the essential function of trans-translation. In Mycolicibacterium gilvum (strain PYR-GCK) (Mycobacterium gilvum (strain PYR-GCK)), this protein is SsrA-binding protein.